The chain runs to 467 residues: Ribulose bisphosphate carboxylase large chain (467 aa).

Lys5 is modified (N6,N6,N6-trimethyllysine). Positions 114 and 164 each coordinate substrate. The active-site Proton acceptor is the Lys166. Lys168 provides a ligand contact to substrate. Lys192, Asp194, and Glu195 together coordinate Mg(2+). Lys192 carries the N6-carboxylysine modification. Catalysis depends on His285, which acts as the Proton acceptor. Arg286, His318, and Ser370 together coordinate substrate.

It belongs to the RuBisCO large chain family. Type I subfamily. As to quaternary structure, heterohexadecamer of 8 large chains and 8 small chains; disulfide-linked. The disulfide link is formed within the large subunit homodimers. Requires Mg(2+) as cofactor. Post-translationally, the disulfide bond which can form in the large chain dimeric partners within the hexadecamer appears to be associated with oxidative stress and protein turnover.

The protein resides in the plastid. The protein localises to the chloroplast. It carries out the reaction 2 (2R)-3-phosphoglycerate + 2 H(+) = D-ribulose 1,5-bisphosphate + CO2 + H2O. It catalyses the reaction D-ribulose 1,5-bisphosphate + O2 = 2-phosphoglycolate + (2R)-3-phosphoglycerate + 2 H(+). Its function is as follows. RuBisCO catalyzes two reactions: the carboxylation of D-ribulose 1,5-bisphosphate, the primary event in carbon dioxide fixation, as well as the oxidative fragmentation of the pentose substrate in the photorespiration process. Both reactions occur simultaneously and in competition at the same active site. This chain is Ribulose bisphosphate carboxylase large chain, found in Eriodictyon californicum (California yerba santa).